Reading from the N-terminus, the 172-residue chain is Small ribosomal subunit protein uS5 (172 aa).

Positions 11–74 (LFESVVDIAR…RKAKGAMIRF (64 aa)) constitute an S5 DRBM domain.

The protein belongs to the universal ribosomal protein uS5 family. In terms of assembly, part of the 30S ribosomal subunit. Contacts proteins S4 and S8.

With S4 and S12 plays an important role in translational accuracy. In terms of biological role, located at the back of the 30S subunit body where it stabilizes the conformation of the head with respect to the body. This Neorickettsia sennetsu (strain ATCC VR-367 / Miyayama) (Ehrlichia sennetsu) protein is Small ribosomal subunit protein uS5.